A 599-amino-acid chain; its full sequence is Retrotransposon Gag-like protein 5 (599 aa).

Disordered stretches follow at residues 77-97, 116-139, and 377-450; these read DPTPEEEEEEEEEVPFLCWPP, DYTNPDGSSDPPLSPSPSQPELHS, and FPQE…EEDE. A compositionally biased stretch (acidic residues) spans 78 to 90; sequence PTPEEEEEEEEEV. 2 stretches are compositionally biased toward acidic residues: residues 393-432 and 439-450; these read DEMEDEEDEDEDEDYEFEEEDEDDDDEEEEEEEEEEEDKE and DSDENKYEEEDE.

This is Retrotransposon Gag-like protein 5 from Mus musculus (Mouse).